The primary structure comprises 293 residues: MGLVKVIKNKAYFKRYQVKLRRRREGKTDYYARKRLTVQDKNKYNTPKYRLIVRITNKDVVAQLAYSKIEGDVVVASAYSHELPRYGLKVGLTNYAAAYATGLLLARRHLKTIGLDSTYKGHEELTGEDYNVEEEGDRAPFKAVLDIGLARTTTGSKIFAVMKGVADGGINVPHSESRFFGFDQESKEYNAEAHRDRILGKHVADYMTYLKEEDEDRYKRQFSKFLAAGLNADNLVATYQKVHSAIRADASPAAKKAAKPSKRHTAKRLTYDERKQRVADKKALLLQLKEQQE.

Residues 249–273 (DASPAAKKAAKPSKRHTAKRLTYDE) form a disordered region. Over residues 256 to 267 (KAAKPSKRHTAK) the composition is skewed to basic residues.

This sequence belongs to the universal ribosomal protein uL18 family. Component of the large ribosomal subunit (LSU).

It localises to the cytoplasm. Its subcellular location is the nucleus. Its function is as follows. Component of the ribosome, a large ribonucleoprotein complex responsible for the synthesis of proteins in the cell. The small ribosomal subunit (SSU) binds messenger RNAs (mRNAs) and translates the encoded message by selecting cognate aminoacyl-transfer RNA (tRNA) molecules. The large subunit (LSU) contains the ribosomal catalytic site termed the peptidyl transferase center (PTC), which catalyzes the formation of peptide bonds, thereby polymerizing the amino acids delivered by tRNAs into a polypeptide chain. The nascent polypeptides leave the ribosome through a tunnel in the LSU and interact with protein factors that function in enzymatic processing, targeting, and the membrane insertion of nascent chains at the exit of the ribosomal tunnel. This Caenorhabditis elegans protein is Large ribosomal subunit protein uL18 (rpl-5).